Consider the following 193-residue polypeptide: Mesogenin-1 (193 aa).

The disordered stretch occupies residues 34-59 (GPFELNQASPSQSLSPAPSLESYSSS). Low complexity predominate over residues 40-59 (QASPSQSLSPAPSLESYSSS). The region spanning 124–178 (QRRRKASEREKLRMRTLADALHTLRNYLPPVYSQRGQPLTKIQTLKYTIKYIGEL) is the bHLH domain.

The protein localises to the nucleus. Functionally, involved in specifying the paraxial, but not dorsal, mesoderm. May regulate the expression of T-box transcription factors required for mesoderm formation and differentiation. The polypeptide is Mesogenin-1 (MSGN1) (Homo sapiens (Human)).